Here is a 271-residue protein sequence, read N- to C-terminus: Secretagogin (271 aa).

EF-hand domains follow at residues 8–43 (LDAAEFLEIWQRFDADDNGYIEGKELDEFFCHLLKK), 53–88 (KVQGVKDRFMSAYDITADGRLQIQELANMILPEDEN), 100–135 (DNSVEFMRIWRKFDEDSSGFISAVELRNFLQDLFLQ), 144–179 (KLDEYTDTMMKLFNRNKDGRLDLNDLAKILALQENF), 192–227 (ERKSDFETIFAHYDVSKTGALEGPEVDGFVKDMMEL), and 235–271 (VDLDKFRQILLNHCDVNKDGKIQKSELALCLGLKANP). 5 residues coordinate Ca(2+): aspartate 21, aspartate 23, asparagine 25, tyrosine 27, and glutamate 32. Ca(2+) is bound by residues aspartate 113, aspartate 115, serine 117, glutamate 124, asparagine 159, aspartate 161, arginine 163, aspartate 168, aspartate 205, serine 207, threonine 209, glutamate 216, aspartate 249, asparagine 251, aspartate 253, lysine 255, and glutamate 260.

Its subcellular location is the cytoplasm. The protein is Secretagogin (scgn) of Xenopus laevis (African clawed frog).